Here is a 402-residue protein sequence, read N- to C-terminus: Putative F-box protein At4g22180 (402 aa).

An F-box domain is found at 18 to 64; sequence PNSWSELPLDLLTAVFERLSYANFQRAKSVCSSWHSGSRQSVPIQIP.

This chain is Putative F-box protein At4g22180, found in Arabidopsis thaliana (Mouse-ear cress).